Consider the following 311-residue polypeptide: Apolipoprotein E (311 aa).

An N-terminal signal peptide occupies residues 1-18 (MKVWWAVLAAAILAGCRA). 8 repeat units span residues 74-95 (MLME…EQLS), 96-116 (PMAQ…GALE), 117-138 (ADME…AMLG), 139-160 (QSTE…KRLL), 161-182 (RDAE…EGAE), 183-204 (RGVS…LRVA), 205-226 (TVGT…ERLR), and 227-248 (GHLE…EQVE). The segment at 74–248 (MLMEETMKEV…RLNEVREQVE (175 aa)) is 8 X 22 AA approximate tandem repeats. M136 is subject to Methionine sulfoxide. S140 is modified (phosphoserine). The tract at residues 151–161 (HLRKLRKRLLR) is LDL and other lipoprotein receptors binding. 155-158 (LRKR) contributes to the heparin binding site. Residues 203 to 283 (VATVGTLAGR…SWFEPLVEDM (81 aa)) form a lipid-binding and lipoprotein association region. T205 is a glycosylation site (O-linked (GalNAc...) threonine). 222–229 (GERLRGHL) provides a ligand contact to heparin. Residues 259 to 311 (PQMRLQAEAFQARLKSWFEPLVEDMQRQWAGLVEKLQAAMPSKAPAAAPIENQ) are homooligomerization. The segment at 271 to 283 (RLKSWFEPLVEDM) is specificity for association with VLDL.

This sequence belongs to the apolipoprotein A1/A4/E family. As to quaternary structure, homotetramer. May interact with ABCA1; functionally associated with ABCA1 in the biogenesis of HDLs. May interact with APP/A4 amyloid-beta peptide; the interaction is extremely stable in vitro but its physiological significance is unclear. May interact with MAPT. May interact with MAP2. In the cerebrospinal fluid, interacts with secreted SORL1. Interacts with PMEL; this allows the loading of PMEL luminal fragment on ILVs to induce fibril nucleation. Post-translationally, APOE exists as multiple glycosylated and sialylated glycoforms within cells and in plasma. The extent of glycosylation and sialylation are tissue and context specific. In terms of processing, glycated in plasma VLDL. Phosphorylated by FAM20C in the extracellular medium.

It localises to the secreted. It is found in the extracellular space. Its subcellular location is the extracellular matrix. The protein resides in the extracellular vesicle. The protein localises to the endosome. It localises to the multivesicular body. In terms of biological role, APOE is an apolipoprotein, a protein associating with lipid particles, that mainly functions in lipoprotein-mediated lipid transport between organs via the plasma and interstitial fluids. APOE is a core component of plasma lipoproteins and is involved in their production, conversion and clearance. Apolipoproteins are amphipathic molecules that interact both with lipids of the lipoprotein particle core and the aqueous environment of the plasma. As such, APOE associates with chylomicrons, chylomicron remnants, very low density lipoproteins (VLDL) and intermediate density lipoproteins (IDL) but shows a preferential binding to high-density lipoproteins (HDL). It also binds a wide range of cellular receptors including the LDL receptor/LDLR and the very low-density lipoprotein receptor/VLDLR that mediate the cellular uptake of the APOE-containing lipoprotein particles. Finally, APOE also has a heparin-binding activity and binds heparan-sulfate proteoglycans on the surface of cells, a property that supports the capture and the receptor-mediated uptake of APOE-containing lipoproteins by cells. The protein is Apolipoprotein E (APOE) of Oryctolagus cuniculus (Rabbit).